Here is a 311-residue protein sequence, read N- to C-terminus: Inositol oxygenase 1 (311 aa).

Basic and acidic residues predominate over residues 1-11 (MTILIDRHSDQ). Residues 1–29 (MTILIDRHSDQNDAGDEIVEKNQGNGKEE) form a disordered region. Substrate-binding positions include Arg52 and 109-111 (DES). The Fe cation site is built by His122, His147, and Asp148. Substrate-binding positions include Lys151 and 168–169 (GD). Fe cation-binding residues include His220, His246, and Asp279. Position 246–247 (246–247 (HS)) interacts with substrate.

It belongs to the myo-inositol oxygenase family. The cofactor is Fe cation. In terms of tissue distribution, expressed in roots, young leaves, stems, flowers and siliques.

It is found in the cytoplasm. It carries out the reaction myo-inositol + O2 = D-glucuronate + H2O + H(+). The protein operates within polyol metabolism; myo-inositol degradation into D-glucuronate; D-glucuronate from myo-inositol: step 1/1. Functionally, catalyzes the oxygenative cleavage of myo-inositol to D-glucuronate. Involved in the biosynthesis of UDP-glucuronic acid (UDP-GlcA), providing nucleotide sugars for cell-wall polymers. May be also involved in plant ascorbate biosynthesis. The sequence is that of Inositol oxygenase 1 (MIOX1) from Arabidopsis thaliana (Mouse-ear cress).